The primary structure comprises 325 residues: Probable tRNA pseudouridine synthase B (325 aa).

The Nucleophile role is filled by aspartate 71. The PUA domain maps to 238-313 (LPKIYVKDSA…VAASIERVIM (76 aa)).

This sequence belongs to the pseudouridine synthase TruB family. Type 2 subfamily.

It carries out the reaction uridine(55) in tRNA = pseudouridine(55) in tRNA. Its function is as follows. Could be responsible for synthesis of pseudouridine from uracil-55 in the psi GC loop of transfer RNAs. This chain is Probable tRNA pseudouridine synthase B, found in Korarchaeum cryptofilum (strain OPF8).